Here is a 432-residue protein sequence, read N- to C-terminus: Gamma-glutamyl phosphate reductase (432 aa).

Belongs to the gamma-glutamyl phosphate reductase family.

The protein localises to the cytoplasm. It catalyses the reaction L-glutamate 5-semialdehyde + phosphate + NADP(+) = L-glutamyl 5-phosphate + NADPH + H(+). Its pathway is amino-acid biosynthesis; L-proline biosynthesis; L-glutamate 5-semialdehyde from L-glutamate: step 2/2. Its function is as follows. Catalyzes the NADPH-dependent reduction of L-glutamate 5-phosphate into L-glutamate 5-semialdehyde and phosphate. The product spontaneously undergoes cyclization to form 1-pyrroline-5-carboxylate. This Ruminiclostridium cellulolyticum (strain ATCC 35319 / DSM 5812 / JCM 6584 / H10) (Clostridium cellulolyticum) protein is Gamma-glutamyl phosphate reductase.